A 550-amino-acid chain; its full sequence is Natural resistance-associated macrophage protein 1 (550 aa).

Residues 1 to 45 are disordered; sequence MTGDKGPQRLSGSSYGSISSPTSPTSPGPQQAPPRETYLSEKIPI. Topologically, residues 1-58 are cytoplasmic; that stretch reads MTGDKGPQRLSGSSYGSISSPTSPTSPGPQQAPPRETYLSEKIPIPDTKPGTFSLRKL. A compositionally biased stretch (low complexity) spans 11–23; sequence SGSSYGSISSPTS. Residues 59-76 form a helical membrane-spanning segment; it reads WAFTGPGFLMSIAFLDPG. At 77–85 the chain is on the extracellular side; sequence NIESDLQAG. Residues 86-105 form a helical membrane-spanning segment; that stretch reads AVAGFKLLWVLLWATVLGLL. Residues 106–142 lie on the Cytoplasmic side of the membrane; the sequence is CQRLAARLGVVTGKDLGEVCHLYYPKVPRTVLWLTIE. A helical membrane pass occupies residues 143-163; sequence LAIVGSDMQEVIGTAIAFNLL. Topologically, residues 164 to 167 are extracellular; it reads SAGR. A helical membrane pass occupies residues 168–187; the sequence is IPLWGGVLITIVDTFFFLFL. At 188 to 196 the chain is on the cytoplasmic side; sequence DNYGLRKLE. Residues 197–217 traverse the membrane as a helical segment; the sequence is AFFGLLITIMALTFGYEYVVA. Residues 218-240 lie on the Extracellular side of the membrane; the sequence is RPEQGALLRGLFLPSCPGCGHPE. A helical membrane pass occupies residues 241 to 259; that stretch reads LLQAVGIVGAIIMPHNIYL. At 260–287 the chain is on the cytoplasmic side; that stretch reads HSALVKSREIDRARRADIREANMYFLIE. A helical membrane pass occupies residues 288 to 307; the sequence is ATIALSVSFIINLFVMAVFG. Over 308-349 the chain is Extracellular; the sequence is QAFYQKTNQAAFNICANSSLHDYAKIFPMNNATVAVDIYQGG. N-linked (GlcNAc...) asparagine glycosylation is found at asparagine 324 and asparagine 338. A helical membrane pass occupies residues 350 to 369; that stretch reads VILGCLFGPAALYIWAIGLL. At 370–400 the chain is on the cytoplasmic side; that stretch reads AAGQSSTMTGTYAGQFVMEGFLRLRWSRFAR. A helical membrane pass occupies residues 401–418; sequence VLLTRSCAILPTVLVAVF. Residues 419-429 lie on the Extracellular side of the membrane; it reads RDLRDLSGLND. The helical transmembrane segment at 430-450 threads the bilayer; sequence LLNVLQSLLLPFAVLPILTFT. Topologically, residues 451-466 are cytoplasmic; sequence SMPTLMQEFANGLLNK. The helical transmembrane segment at 467-488 threads the bilayer; sequence VVTSSIMVLVCAINLYFVVSYL. Residues 489–496 lie on the Extracellular side of the membrane; sequence PSLPHPAY. The chain crosses the membrane as a helical span at residues 497 to 516; it reads FGLAALLAAAYLGLSTYLVW. Residues 517–550 lie on the Cytoplasmic side of the membrane; it reads TCCLAHGATFLAHSSHHHFLYGLLEEDQKGETSG.

It belongs to the NRAMP family. In terms of tissue distribution, macrophages; peripheral blood leukocytes, lung, spleen and liver.

The protein localises to the late endosome membrane. The protein resides in the lysosome membrane. The enzyme catalyses Zn(2+)(in) + H(+)(out) = Zn(2+)(out) + H(+)(in). It catalyses the reaction Fe(2+)(in) + H(+)(out) = Fe(2+)(out) + H(+)(in). It carries out the reaction Mn(2+)(in) + H(+)(out) = Mn(2+)(out) + H(+)(in). Macrophage-specific antiporter that fluxes metal ions in either direction against a proton gradient. Localized to late endosomal lysosomal membranes, delivers bivalent cations from the cytosol into these acidic compartments where they may directly affect antimicrobial activity. Involved in iron metabolism and host natural resistance to infection with intracellular parasites. Pathogen resistance involves sequestration of Fe(2+) and Mn(2+), cofactors of both prokaryotic and eukaryotic catalases and superoxide dismutases, not only to protect the macrophage against its own generation of reactive oxygen species, but to deny the cations to the pathogen for synthesis of its protective enzymes. This chain is Natural resistance-associated macrophage protein 1, found in Homo sapiens (Human).